The primary structure comprises 423 residues: Elongation factor 1-alpha (423 aa).

Positions 5-211 (KEHINLAFIG…DNLEPPEKPT (207 aa)) constitute a tr-type G domain. Positions 14-21 (GHVDHGKS) are G1. 14–21 (GHVDHGKS) lines the GTP pocket. S21 is a Mg(2+) binding site. A G2 region spans residues 60–64 (GVTID). Residues 81 to 84 (DCPG) form a G3 region. Residues 81–85 (DCPGH) and 136–139 (NKMD) contribute to the GTP site. Positions 136–139 (NKMD) are G4. A G5 region spans residues 175–177 (SAF).

This sequence belongs to the TRAFAC class translation factor GTPase superfamily. Classic translation factor GTPase family. EF-Tu/EF-1A subfamily.

It localises to the cytoplasm. It carries out the reaction GTP + H2O = GDP + phosphate + H(+). Functionally, GTP hydrolase that promotes the GTP-dependent binding of aminoacyl-tRNA to the A-site of ribosomes during protein biosynthesis. This is Elongation factor 1-alpha from Methanopyrus kandleri (strain AV19 / DSM 6324 / JCM 9639 / NBRC 100938).